The following is a 67-amino-acid chain: DNA-directed RNA polymerase subunit omega (67 aa).

This sequence belongs to the RNA polymerase subunit omega family. The RNAP catalytic core consists of 2 alpha, 1 beta, 1 beta' and 1 omega subunit. When a sigma factor is associated with the core the holoenzyme is formed, which can initiate transcription.

The catalysed reaction is RNA(n) + a ribonucleoside 5'-triphosphate = RNA(n+1) + diphosphate. Functionally, promotes RNA polymerase assembly. Latches the N- and C-terminal regions of the beta' subunit thereby facilitating its interaction with the beta and alpha subunits. This Methylibium petroleiphilum (strain ATCC BAA-1232 / LMG 22953 / PM1) protein is DNA-directed RNA polymerase subunit omega.